The chain runs to 177 residues: Probable inosine/xanthosine triphosphatase (177 aa).

This sequence belongs to the YjjX NTPase family. Homodimer. Mg(2+) serves as cofactor. It depends on Mn(2+) as a cofactor.

The enzyme catalyses XTP + H2O = XDP + phosphate + H(+). The catalysed reaction is ITP + H2O = IDP + phosphate + H(+). Phosphatase that hydrolyzes non-canonical purine nucleotides such as XTP and ITP to their respective diphosphate derivatives. Probably excludes non-canonical purines from DNA/RNA precursor pool, thus preventing their incorporation into DNA/RNA and avoiding chromosomal lesions. In Pyrobaculum arsenaticum (strain DSM 13514 / JCM 11321 / PZ6), this protein is Probable inosine/xanthosine triphosphatase.